A 273-amino-acid chain; its full sequence is Vacuolar membrane protein YPL162C (273 aa).

The Vacuolar portion of the chain corresponds to 1–13 (MYVSNGKDTCQLL). The helical transmembrane segment at 14–34 (GPVSLFVQTLMGMTAVIVLLV) threads the bilayer. Residues 35–51 (KRNYEHPRRKMIVWSYD) are Cytoplasmic-facing. A helical membrane pass occupies residues 52-72 (IGKQIIGSLGIHFLNLGISIL). The Vacuolar segment spans residues 73-97 (KKRRRSLFAITAKGNDDEDQCDWYF). A helical transmembrane segment spans residues 98–118 (LNLLLDTTVGIPILWLCLYII). The Cytoplasmic segment spans residues 119 to 156 (EKVLKSLHFQNIESGNYFPSKTVGSHPRKPLFSAFVKQ). The chain crosses the membrane as a helical span at residues 157-177 (LLIFIVGLGVMKFCVFLILNY). Residues 178 to 198 (LEDLAYWFADLILGWSDSWPN) lie on the Vacuolar side of the membrane. The chain crosses the membrane as a helical span at residues 199–219 (FQVFLVMFVFPILLNCFQYFC). The Cytoplasmic portion of the chain corresponds to 220–273 (VDNVIRLHSESLTITNAENFETNTFLNDEIPDLSEVSNEVPNKDNNISSYGSII).

It is found in the vacuole membrane. The sequence is that of Vacuolar membrane protein YPL162C from Saccharomyces cerevisiae (strain ATCC 204508 / S288c) (Baker's yeast).